The chain runs to 195 residues: Imidazoleglycerol-phosphate dehydratase (195 aa).

It belongs to the imidazoleglycerol-phosphate dehydratase family.

Its subcellular location is the cytoplasm. It carries out the reaction D-erythro-1-(imidazol-4-yl)glycerol 3-phosphate = 3-(imidazol-4-yl)-2-oxopropyl phosphate + H2O. The protein operates within amino-acid biosynthesis; L-histidine biosynthesis; L-histidine from 5-phospho-alpha-D-ribose 1-diphosphate: step 6/9. In Burkholderia pseudomallei (strain 1710b), this protein is Imidazoleglycerol-phosphate dehydratase.